A 527-amino-acid chain; its full sequence is Serine/threonine-protein kinase NLK (527 aa).

Sufficient for interaction with DAPK3 regions lie at residues 1-125 (MSLC…KAHH) and 124-416 (HHHQ…SKRI). Required for interaction with TAB2 regions lie at residues 1–304 (MSLC…VVTQ) and 434–527 (YHTC…LVWE). Disordered stretches follow at residues 22–72 (AAAA…SSAA) and 90–140 (QQPY…DIEP). Positions 26 to 54 (GHHHHHHHHLPHLPPPHLHHHHHPQHHLH) are enriched in basic residues. Positions 103–119 (PGPAAAAPAQVQAAAAA) are enriched in low complexity. Basic residues predominate over residues 122-131 (KAHHHQHSHH). Residues 138–427 (IEPDRPIGYG…AKDALAHPYL (290 aa)) enclose the Protein kinase domain. ATP-binding positions include 144-152 (IGYGAFGVV) and K167. The active-site Proton acceptor is the D264. Position 298 is a phosphothreonine; by autocatalysis (T298). Positions 298-300 (TQE) match the TQE motif. The tract at residues 428–527 (DEGRLRYHTC…EMPPSPLVWE (100 aa)) is required for homodimerization and kinase activation and localization to the nucleus. S522 carries the phosphoserine modification.

It belongs to the protein kinase superfamily. CMGC Ser/Thr protein kinase family. MAP kinase subfamily. As to quaternary structure, homodimer. Homodimerization is required for intermolecular autophosphorylation, kinase activation and nuclear localization. May interact with components of cullin-RING-based SCF (SKP1-CUL1-F-box protein) E3 ubiquitin-protein ligase complexes. Interacts with LEF1, MEF2A, MYBL1 and MYBL2. Interacts with the upstream activating kinases HIPK2 and MAP3K7/TAK1. Interaction with MAP3K7/TAK1 seems to be indirect, and may be mediated by other proteins such as STAT3, TAB1 and TAB2. Interacts with and phosphorylates a number of transcription factors including FOXO1, FOXO3, FOXO4, MYB, NOTCH1 and TCF7L2/TCF4. Interacts with DAPK3/ZIPK, and this interaction may disrupt interaction with transcription factors such as TCF7L2/TCF4. Interacts with RNF138/NARF. Interacts with ATF5; the interaction stabilizes ATF5 at the protein level in a kinase-independent manner. The cofactor is Mg(2+). Post-translationally, phosphorylated on Thr-298. Intermolecular autophosphorylation on Thr-298 activates the enzyme.

It is found in the nucleus. Its subcellular location is the cytoplasm. The enzyme catalyses L-seryl-[protein] + ATP = O-phospho-L-seryl-[protein] + ADP + H(+). The catalysed reaction is L-threonyl-[protein] + ATP = O-phospho-L-threonyl-[protein] + ADP + H(+). Activated by dimerization and subsequent intermolecular autophosphorylation on Thr-298. Activated by the non-canonical Wnt signaling pathway, in which WNT5A treatment leads to activation of MAP3K7/TAK1 and HIPK2, which subsequently phosphorylates and activates this protein. Other cytokines such as IL6 may also activate this regulatory circuit. Serine/threonine-protein kinase that regulates a number of transcription factors with key roles in cell fate determination. Positive effector of the non-canonical Wnt signaling pathway, acting downstream of WNT5A, MAP3K7/TAK1 and HIPK2. Negative regulator of the canonical Wnt/beta-catenin signaling pathway. Binds to and phosphorylates TCF7L2/TCF4 and LEF1, promoting the dissociation of the TCF7L2/LEF1/beta-catenin complex from DNA, as well as the ubiquitination and subsequent proteolysis of LEF1. Together these effects inhibit the transcriptional activation of canonical Wnt/beta-catenin target genes. Negative regulator of the Notch signaling pathway. Binds to and phosphorylates NOTCH1, thereby preventing the formation of a transcriptionally active ternary complex of NOTCH1, RBPJ/RBPSUH and MAML1. Negative regulator of the MYB family of transcription factors. Phosphorylation of MYB leads to its subsequent proteolysis while phosphorylation of MYBL1 and MYBL2 inhibits their interaction with the coactivator CREBBP. Other transcription factors may also be inhibited by direct phosphorylation of CREBBP itself. Acts downstream of IL6 and MAP3K7/TAK1 to phosphorylate STAT3, which is in turn required for activation of NLK by MAP3K7/TAK1. Upon IL1B stimulus, cooperates with ATF5 to activate the transactivation activity of C/EBP subfamily members. Phosphorylates ATF5 but also stabilizes ATF5 protein levels in a kinase-independent manner. Acts as an inhibitor of the mTORC1 complex in response to osmotic stress by mediating phosphorylation of RPTOR, thereby preventing recruitment of the mTORC1 complex to lysosomes. This chain is Serine/threonine-protein kinase NLK (NLK), found in Homo sapiens (Human).